A 214-amino-acid polypeptide reads, in one-letter code: Large ribosomal subunit protein uL4c (214 aa).

A disordered region spans residues 43 to 80 (KQSNEKRQGSANTKTRSEVRGGGRKPWRQKGTGRARAG). Positions 64–75 (GGRKPWRQKGTG) are enriched in basic residues.

The protein belongs to the universal ribosomal protein uL4 family. In terms of assembly, part of the 50S ribosomal subunit.

Its subcellular location is the plastid. It is found in the chloroplast. Its function is as follows. Probably binds the 23S rRNA. The protein is Large ribosomal subunit protein uL4c (rpl4) of Porphyra purpurea (Red seaweed).